A 491-amino-acid polypeptide reads, in one-letter code: 3-octaprenyl-4-hydroxybenzoate carboxy-lyase (491 aa).

Residue N172 coordinates Mn(2+). Residues 175-177 (IYR), 189-191 (RWL), and 194-195 (RG) each bind prenylated FMN. A Mn(2+)-binding site is contributed by E238. Catalysis depends on D287, which acts as the Proton donor.

This sequence belongs to the UbiD family. As to quaternary structure, homohexamer. The cofactor is prenylated FMN. Requires Mn(2+) as cofactor.

Its subcellular location is the cell membrane. It catalyses the reaction a 4-hydroxy-3-(all-trans-polyprenyl)benzoate + H(+) = a 2-(all-trans-polyprenyl)phenol + CO2. It functions in the pathway cofactor biosynthesis; ubiquinone biosynthesis. In terms of biological role, catalyzes the decarboxylation of 3-octaprenyl-4-hydroxy benzoate to 2-octaprenylphenol, an intermediate step in ubiquinone biosynthesis. This Histophilus somni (strain 129Pt) (Haemophilus somnus) protein is 3-octaprenyl-4-hydroxybenzoate carboxy-lyase.